The sequence spans 234 residues: MSGLPIATNLYFDAHFHRHGVKLLPNEFYTTREDMVLVTVLGSCVAACLHDPIGRIGGMNHFMLPDDGADPSAAASESMRYGAYAMEVLINELIKAGGRRERFEAKVFGGAAVLAGMTTINIGDRNADFVRRYLALERIRITAEDLQGVHPRKVAFMPHTGQAMVKKLRVQAPDVAAREAALAREAVDPHGERAPRVRPRVELFGTPAPKAQAKPRIELFGMRAMQPATRKQEA.

This sequence belongs to the CheD family.

It carries out the reaction L-glutaminyl-[protein] + H2O = L-glutamyl-[protein] + NH4(+). In terms of biological role, probably deamidates glutamine residues to glutamate on methyl-accepting chemotaxis receptors (MCPs), playing an important role in chemotaxis. In Burkholderia pseudomallei (strain 1710b), this protein is Probable chemoreceptor glutamine deamidase CheD.